Reading from the N-terminus, the 445-residue chain is Histidinol dehydrogenase (445 aa).

Y130, Q192, and N215 together coordinate NAD(+). Substrate-binding residues include S238, Q260, and H263. The Zn(2+) site is built by Q260 and H263. Catalysis depends on proton acceptor residues E328 and H329. Substrate is bound by residues H329, D362, E416, and H421. Residue D362 participates in Zn(2+) binding. H421 provides a ligand contact to Zn(2+).

The protein belongs to the histidinol dehydrogenase family. Zn(2+) is required as a cofactor.

It carries out the reaction L-histidinol + 2 NAD(+) + H2O = L-histidine + 2 NADH + 3 H(+). It participates in amino-acid biosynthesis; L-histidine biosynthesis; L-histidine from 5-phospho-alpha-D-ribose 1-diphosphate: step 9/9. Catalyzes the sequential NAD-dependent oxidations of L-histidinol to L-histidinaldehyde and then to L-histidine. The chain is Histidinol dehydrogenase from Gloeobacter violaceus (strain ATCC 29082 / PCC 7421).